Here is a 337-residue protein sequence, read N- to C-terminus: Phenylalanine--tRNA ligase alpha subunit (337 aa).

Glu258 is a binding site for Mg(2+).

Belongs to the class-II aminoacyl-tRNA synthetase family. Phe-tRNA synthetase alpha subunit type 1 subfamily. In terms of assembly, tetramer of two alpha and two beta subunits. Requires Mg(2+) as cofactor.

It is found in the cytoplasm. The catalysed reaction is tRNA(Phe) + L-phenylalanine + ATP = L-phenylalanyl-tRNA(Phe) + AMP + diphosphate + H(+). The protein is Phenylalanine--tRNA ligase alpha subunit of Paraburkholderia phytofirmans (strain DSM 17436 / LMG 22146 / PsJN) (Burkholderia phytofirmans).